We begin with the raw amino-acid sequence, 145 residues long: Synaptojanin-2-binding protein (145 aa).

The Cytoplasmic segment spans residues 1-117; the sequence is MNGRVDYLVT…VHRGEGEPSG (117 aa). Residues 13–100 form the PDZ domain; it reads EINLTRGPSG…AVSLRVQHRL (88 aa). Residues 118–138 form a helical; Anchor for type IV membrane protein membrane-spanning segment; that stretch reads VPVAMVLLPVFALTMVAVWAF. Over 139 to 145 the chain is Mitochondrial intermembrane; it reads VRYRKQL.

As to quaternary structure, binds (via the PDZ domain) to isoform 2A of SYNJ2 (via the unique motif in the C-terminus). Interacts (via C-terminus) with RALBP1. Interacts (via PDZ domain) with ACVR2A (via C-terminus) and ACVR2B (via C-terminus). Forms a ternary complex with ACVR2A and RALBP1. Interacts with MAPK12. Interacts with DLL1; enhances DLL1 protein stability, and promotes notch signaling in endothelial cells. In terms of tissue distribution, isoform 1 and isoform 2 are widely expressed, notably in brain, heart, lung, liver, kidney, skeletal muscle, ovary and testis. Isoform 3 is detected only in heart, spleen and testis.

The protein localises to the mitochondrion outer membrane. The protein resides in the cytoplasm. It is found in the perinuclear region. Isoform 1 regulates endocytosis of activin type 2 receptor kinases through the Ral/RALBP1-dependent pathway and may be involved in suppression of activin-induced signal transduction. Isoform 2 and isoform 3 show a stimulatory affect on activin-induced signal transduction and enhance activin type 2 expression at the cell surface. This Mus musculus (Mouse) protein is Synaptojanin-2-binding protein.